Reading from the N-terminus, the 53-residue chain is uncharacterized protein (53 aa).

Residues 1 to 23 form the signal peptide; the sequence is MSILLKILFKLLLLILSITFVIT.

This is an uncharacterized protein from Acheta domesticus (House cricket).